The chain runs to 1438 residues: Gag-Pol polyprotein (1438 aa).

The N-myristoyl glycine; by host moiety is linked to residue Gly-2. The Nuclear export signal signature appears at 16 to 22 (WEKIYLR). A Nuclear localization signal motif is present at residues 26–32 (KKKYMMK). CCHC-type zinc fingers lie at residues 385–402 (VKCF…NCKA) and 406–423 (KGCW…NCTN). Positions 439–481 (GKAREFPSEETRTNSSTNRELRVQGGGTCPEGGSEERGDREQA) are disordered. Over residues 440-450 (KAREFPSEETR) the composition is skewed to basic and acidic residues. The region spanning 507–576 (KEALLDTGAD…TPVNIIGRNI (70 aa)) is the Peptidase A2 domain. Asp-512 functions as the For protease activity; shared with dimeric partner in the catalytic mechanism. Positions 630–820 (EGKISRVGPE…PPFLWMGYEL (191 aa)) constitute a Reverse transcriptase domain. Mg(2+) contacts are provided by Asp-696, Asp-771, and Asp-772. The RT 'primer grip' stretch occupies residues 813-821 (FLWMGYELH). The Tryptophan repeat motif motif lies at 984-1000 (WEAWWTDYWQATWIPEW). The 124-residue stretch at 1020-1143 (IPGAETFYVD…IDKLVSSGIR (124 aa)) folds into the RNase H type-1 domain. Residues Asp-1029, Glu-1064, Asp-1084, and Asp-1135 each coordinate Mg(2+). Residues 1149 to 1190 (DGIDKAQEEHEKYHNNWRAMASDFNLPPIVAKEIVANCDKCQ) form an Integrase-type zinc finger. Zn(2+)-binding residues include His-1158, His-1162, Cys-1186, and Cys-1189. In terms of domain architecture, Integrase catalytic spans 1200–1350 (VDCSPGIWQL…SAGERIIDIL (151 aa)). Mg(2+) is bound by residues Asp-1210 and Asp-1262. The segment at residues 1369-1416 (FRVYYRDSRDPIWKGPAKLLWKGEGAVVLQDQEEIKVVPRRKAKIIRD) is a DNA-binding region (integrase-type).

As to quaternary structure, homotrimer. Interacts with gp41 (via C-terminus). Homodimer. The active site consists of two apposed aspartic acid residues. In terms of assembly, heterodimer of p66 RT and p51 RT (RT p66/p51). Heterodimerization of RT is essential for DNA polymerase activity. Despite the sequence identities, p66 RT and p51 RT have distinct folding. As to quaternary structure, homotetramer; may further associate as a homohexadecamer. Mg(2+) is required as a cofactor. Specific enzymatic cleavages by the viral protease yield mature proteins. The protease is released by autocatalytic cleavage. The polyprotein is cleaved during and after budding, this process is termed maturation. Proteolytic cleavage of p66 RT removes the RNase H domain to yield the p51 RT subunit. In terms of processing, capsid protein p24 is phosphorylated.

It localises to the virion. The protein resides in the host nucleus. It is found in the host cytoplasm. Its subcellular location is the host cell membrane. The enzyme catalyses Specific for a P1 residue that is hydrophobic, and P1' variable, but often Pro.. The catalysed reaction is Endohydrolysis of RNA in RNA/DNA hybrids. Three different cleavage modes: 1. sequence-specific internal cleavage of RNA. Human immunodeficiency virus type 1 and Moloney murine leukemia virus enzymes prefer to cleave the RNA strand one nucleotide away from the RNA-DNA junction. 2. RNA 5'-end directed cleavage 13-19 nucleotides from the RNA end. 3. DNA 3'-end directed cleavage 15-20 nucleotides away from the primer terminus.. It carries out the reaction 3'-end directed exonucleolytic cleavage of viral RNA-DNA hybrid.. It catalyses the reaction DNA(n) + a 2'-deoxyribonucleoside 5'-triphosphate = DNA(n+1) + diphosphate. With respect to regulation, the viral protease is inhibited by many synthetic protease inhibitors (PIs), such as amprenavir, atazanavir, indinavir, loprinavir, nelfinavir, ritonavir and saquinavir. RT can be inhibited either by nucleoside RT inhibitors (NRTIs) or by non nucleoside RT inhibitors (NNRTIs). NRTIs act as chain terminators, whereas NNRTIs inhibit DNA polymerization by binding a small hydrophobic pocket near the RT active site and inducing an allosteric change in this region. Classical NRTIs are abacavir, adefovir (PMEA), didanosine (ddI), lamivudine (3TC), stavudine (d4T), tenofovir (PMPA), zalcitabine (ddC), and zidovudine (AZT). Classical NNRTIs are atevirdine (BHAP U-87201E), delavirdine, efavirenz (DMP-266), emivirine (I-EBU), and nevirapine (BI-RG-587). The tritherapies used as a basic effective treatment of AIDS associate two NRTIs and one NNRTI. Use of protease inhibitors in tritherapy regimens permit more ambitious therapeutic strategies. In terms of biological role, gag-Pol polyprotein and Gag polyprotein may regulate their own translation, by the binding genomic RNA in the 5'-UTR. At low concentration, Gag-Pol and Gag would promote translation, whereas at high concentration, the polyproteins encapsidate genomic RNA and then shut off translation. Its function is as follows. Matrix protein p17 has two main functions: in infected cell, it targets Gag and Gag-pol polyproteins to the plasma membrane via a multipartite membrane-binding signal, that includes its myristointegration complex. The myristoylation signal and the NLS exert conflicting influences its subcellular localization. The key regulation of these motifs might be phosphorylation of a portion of MA molecules on the C-terminal tyrosine at the time of virus maturation, by virion-associated cellular tyrosine kinase. Implicated in the release from host cell mediated by Vpu. Capsid protein p24 forms the conical core that encapsulates the genomic RNA-nucleocapsid complex in the virion. The core is constituted by capsid protein hexamer subunits. The core is disassembled soon after virion entry. Interaction with host PPIA/CYPA protects the virus from restriction by host TRIM5-alpha and from an unknown antiviral activity in host cells. This capsid restriction by TRIM5 is one of the factors which restricts SIV to the simian species. Functionally, nucleocapsid protein p7 encapsulates and protects viral dimeric unspliced (genomic) RNA. Binds these RNAs through its zinc fingers. Facilitates rearangement of nucleic acid secondary structure during retrotranscription of genomic RNA. This capability is referred to as nucleic acid chaperone activity. In terms of biological role, the aspartyl protease mediates proteolytic cleavages of Gag and Gag-Pol polyproteins during or shortly after the release of the virion from the plasma membrane. Cleavages take place as an ordered, step-wise cascade to yield mature proteins. This process is called maturation. Displays maximal activity during the budding process just prior to particle release from the cell. Also cleaves Nef and Vif, probably concomitantly with viral structural proteins on maturation of virus particles. Hydrolyzes host EIF4GI and PABP1 in order to shut off the capped cellular mRNA translation. The resulting inhibition of cellular protein synthesis serves to ensure maximal viral gene expression and to evade host immune response. Its function is as follows. Reverse transcriptase/ribonuclease H (RT) is a multifunctional enzyme that converts the viral dimeric RNA genome into dsDNA in the cytoplasm, shortly after virus entry into the cell. This enzyme displays a DNA polymerase activity that can copy either DNA or RNA templates, and a ribonuclease H (RNase H) activity that cleaves the RNA strand of RNA-DNA heteroduplexes in a partially processive 3' to 5' endonucleasic mode. Conversion of viral genomic RNA into dsDNA requires many steps. A tRNA binds to the primer-binding site (PBS) situated at the 5'-end of the viral RNA. RT uses the 3' end of the tRNA primer to perform a short round of RNA-dependent minus-strand DNA synthesis. The reading proceeds through the U5 region and ends after the repeated (R) region which is present at both ends of viral RNA. The portion of the RNA-DNA heteroduplex is digested by the RNase H, resulting in a ssDNA product attached to the tRNA primer. This ssDNA/tRNA hybridizes with the identical R region situated at the 3' end of viral RNA. This template exchange, known as minus-strand DNA strong stop transfer, can be either intra- or intermolecular. RT uses the 3' end of this newly synthesized short ssDNA to perform the RNA-dependent minus-strand DNA synthesis of the whole template. RNase H digests the RNA template except for two polypurine tracts (PPTs) situated at the 5'-end and near the center of the genome. It is not clear if both polymerase and RNase H activities are simultaneous. RNase H can probably proceed both in a polymerase-dependent (RNA cut into small fragments by the same RT performing DNA synthesis) and a polymerase-independent mode (cleavage of remaining RNA fragments by free RTs). Secondly, RT performs DNA-directed plus-strand DNA synthesis using the PPTs that have not been removed by RNase H as primers. PPTs and tRNA primers are then removed by RNase H. The 3' and 5' ssDNA PBS regions hybridize to form a circular dsDNA intermediate. Strand displacement synthesis by RT to the PBS and PPT ends produces a blunt ended, linear dsDNA copy of the viral genome that includes long terminal repeats (LTRs) at both ends. Integrase catalyzes viral DNA integration into the host chromosome, by performing a series of DNA cutting and joining reactions. This enzyme activity takes place after virion entry into a cell and reverse transcription of the RNA genome in dsDNA. The first step in the integration process is 3' processing. This step requires a complex comprising the viral genome, matrix protein, Vpr and integrase. This complex is called the pre-integration complex (PIC). The integrase protein removes 2 nucleotides from each 3' end of the viral DNA, leaving recessed CA OH's at the 3' ends. In the second step, the PIC enters cell nucleus. This process is mediated through integrase and Vpr proteins, and allows the virus to infect a non dividing cell. This ability to enter the nucleus is specific of lentiviruses, other retroviruses cannot and rely on cell division to access cell chromosomes. In the third step, termed strand transfer, the integrase protein joins the previously processed 3' ends to the 5' ends of strands of target cellular DNA at the site of integration. The 5'-ends are produced by integrase-catalyzed staggered cuts, 5 bp apart. A Y-shaped, gapped, recombination intermediate results, with the 5'-ends of the viral DNA strands and the 3' ends of target DNA strands remaining unjoined, flanking a gap of 5 bp. The last step is viral DNA integration into host chromosome. This involves host DNA repair synthesis in which the 5 bp gaps between the unjoined strands are filled in and then ligated. Since this process occurs at both cuts flanking the SIV genome, a 5 bp duplication of host DNA is produced at the ends of SIV integration. Alternatively, Integrase may catalyze the excision of viral DNA just after strand transfer, this is termed disintegration. The protein is Gag-Pol polyprotein (gag-pol) of Pan troglodytes (Chimpanzee).